The chain runs to 294 residues: Undecaprenyl-diphosphatase (294 aa).

Helical transmembrane passes span 2-22 (SMIY…SLIL), 27-47 (LVFS…PISS), 65-85 (VIAF…KIFW), 110-130 (LCIR…MIFY), 135-155 (LIFE…FLLV), 172-192 (ITYL…WPGF), 215-235 (FSFF…LYHY), 239-259 (IGLM…FIAL), and 272-292 (VSLI…YWGL).

It belongs to the UppP family.

It is found in the cell inner membrane. It catalyses the reaction di-trans,octa-cis-undecaprenyl diphosphate + H2O = di-trans,octa-cis-undecaprenyl phosphate + phosphate + H(+). Functionally, catalyzes the dephosphorylation of undecaprenyl diphosphate (UPP). Confers resistance to bacitracin. This chain is Undecaprenyl-diphosphatase, found in Blochmanniella pennsylvanica (strain BPEN).